The sequence spans 513 residues: ATP synthase subunit alpha (513 aa).

ATP is bound at residue 169-176 (GDRQIGKT).

This sequence belongs to the ATPase alpha/beta chains family. F-type ATPases have 2 components, CF(1) - the catalytic core - and CF(0) - the membrane proton channel. CF(1) has five subunits: alpha(3), beta(3), gamma(1), delta(1), epsilon(1). CF(0) has three main subunits: a(1), b(2) and c(9-12). The alpha and beta chains form an alternating ring which encloses part of the gamma chain. CF(1) is attached to CF(0) by a central stalk formed by the gamma and epsilon chains, while a peripheral stalk is formed by the delta and b chains.

The protein localises to the cell inner membrane. It carries out the reaction ATP + H2O + 4 H(+)(in) = ADP + phosphate + 5 H(+)(out). Produces ATP from ADP in the presence of a proton gradient across the membrane. The alpha chain is a regulatory subunit. This chain is ATP synthase subunit alpha, found in Francisella tularensis subsp. tularensis (strain WY96-3418).